Reading from the N-terminus, the 153-residue chain is Aspartate carbamoyltransferase regulatory chain (153 aa).

Positions 109, 114, 138, and 141 each coordinate Zn(2+).

The protein belongs to the PyrI family. In terms of assembly, contains catalytic and regulatory chains. It depends on Zn(2+) as a cofactor.

Its function is as follows. Involved in allosteric regulation of aspartate carbamoyltransferase. This is Aspartate carbamoyltransferase regulatory chain from Enterobacter sp. (strain 638).